A 365-amino-acid polypeptide reads, in one-letter code: Putative fatty acid elongase 2 (365 aa).

Topologically, residues 1-68 (MPDSPTLHHN…SFEFIVNKTR (68 aa)) are lumenal. N-linked (GlcNAc...) asparagine glycosylation is found at asparagine 17 and asparagine 65. Residues 69-89 (FSSAPVVATIIISYYLLILVG) traverse the membrane as a helical segment. Over 90 to 111 (GRIMRNRQPIRLQKIFQYYNLT) the chain is Cytoplasmic. Residues 112–132 (FSIASAILALLIFEQVAPAIY) traverse the membrane as a helical segment. The Lumenal portion of the chain corresponds to 133–149 (KHGFFFSICNEKAWTQP). Residues 150 to 170 (LVFLYYCAYISKFLELTDTFF) traverse the membrane as a helical segment. Residues 171-179 (LVLRKKPLQ) lie on the Cytoplasmic side of the membrane. Residues 180-198 (FLHCYHHGATAVLVYTQIV) traverse the membrane as a helical segment. Residues 199-204 (GRTSIS) lie on the Lumenal side of the membrane. Residues 205 to 225 (WLIIEINLLVHVTMYYYYYLV) form a helical membrane-spanning segment. Residues 226 to 241 (AKGIRVPWKKWVTRFQ) lie on the Cytoplasmic side of the membrane. The chain crosses the membrane as a helical span at residues 242 to 262 (IVQFFADLGFIYFAVYTEVAY). The Lumenal portion of the chain corresponds to 263-278 (RLKFYKACMGHCSGHP). A helical transmembrane segment spans residues 279-299 (LAAFCGLATISSYLVLFIVFY). Topologically, residues 300–365 (HNTYKKNAAL…PISSGLNNEK (66 aa)) are cytoplasmic.

This sequence belongs to the ELO family.

The protein resides in the endoplasmic reticulum membrane. The catalysed reaction is a very-long-chain acyl-CoA + malonyl-CoA + H(+) = a very-long-chain 3-oxoacyl-CoA + CO2 + CoA. Functionally, may be involved in the synthesis of very long chain fatty acids. This is Putative fatty acid elongase 2 from Schizosaccharomyces pombe (strain 972 / ATCC 24843) (Fission yeast).